The primary structure comprises 189 residues: Putative transcription factor ovo-like protein 3 (189 aa).

Residues 1 to 20 form a disordered region; sequence MPRVFLVRSRRPQPPNWSHL. 4 C2H2-type zinc fingers span residues 69–91, 97–119, 125–148, and 164–186; these read LGCPLCPKAFPLQRMLTRHLKCH, HVCHYCGKGFHDAFDLKRHMRTH, FRCGACGKAFTQRCSLEAHLAKVH, and HVCEDCGFTSSRPDAYAQHRTLH.

Belongs to the krueppel C2H2-type zinc-finger protein family.

It is found in the nucleus. In terms of biological role, may act as a transcription regulator. This chain is Putative transcription factor ovo-like protein 3 (Ovol3), found in Mus musculus (Mouse).